We begin with the raw amino-acid sequence, 206 residues long: Large ribosomal subunit protein uL4 (206 aa).

It belongs to the universal ribosomal protein uL4 family. In terms of assembly, part of the 50S ribosomal subunit.

Its function is as follows. One of the primary rRNA binding proteins, this protein initially binds near the 5'-end of the 23S rRNA. It is important during the early stages of 50S assembly. It makes multiple contacts with different domains of the 23S rRNA in the assembled 50S subunit and ribosome. Forms part of the polypeptide exit tunnel. The sequence is that of Large ribosomal subunit protein uL4 from Paracoccus denitrificans (strain Pd 1222).